We begin with the raw amino-acid sequence, 763 residues long: Phosphoglycerol transferase I (763 aa).

Transmembrane regions (helical) follow at residues 1–21 (MSELLSVALFLASVLIYAWKA), 26–46 (WWFAATLTVLGLFVILNITLY), 77–97 (ILPGIGIALALVAVFGALGWV), and 108–128 (VGYSLLALLLALGSVDASPAF).

The protein belongs to the OpgB family.

The protein resides in the cell inner membrane. The catalysed reaction is a phosphatidylglycerol + a membrane-derived-oligosaccharide D-glucose = a 1,2-diacyl-sn-glycerol + a membrane-derived-oligosaccharide 6-(glycerophospho)-D-glucose.. It participates in glycan metabolism; osmoregulated periplasmic glucan (OPG) biosynthesis. Transfers a phosphoglycerol residue from phosphatidylglycerol to the membrane-bound nascent glucan backbones. The chain is Phosphoglycerol transferase I from Salmonella dublin (strain CT_02021853).